The primary structure comprises 241 residues: Triosephosphate isomerase (241 aa).

9–11 (NWK) is a binding site for substrate. His96 serves as the catalytic Electrophile. Residue Glu165 is the Proton acceptor of the active site. Substrate is bound by residues Gly171, Ser204, and 225–226 (GG).

It belongs to the triosephosphate isomerase family. As to quaternary structure, homodimer.

Its subcellular location is the cytoplasm. It catalyses the reaction D-glyceraldehyde 3-phosphate = dihydroxyacetone phosphate. Its pathway is carbohydrate biosynthesis; gluconeogenesis. The protein operates within carbohydrate degradation; glycolysis; D-glyceraldehyde 3-phosphate from glycerone phosphate: step 1/1. In terms of biological role, involved in the gluconeogenesis. Catalyzes stereospecifically the conversion of dihydroxyacetone phosphate (DHAP) to D-glyceraldehyde-3-phosphate (G3P). The chain is Triosephosphate isomerase from Picosynechococcus sp. (strain ATCC 27264 / PCC 7002 / PR-6) (Agmenellum quadruplicatum).